The sequence spans 507 residues: Maturase K (507 aa).

This sequence belongs to the intron maturase 2 family. MatK subfamily.

The protein localises to the plastid. The protein resides in the chloroplast. Its function is as follows. Usually encoded in the trnK tRNA gene intron. Probably assists in splicing its own and other chloroplast group II introns. In Fagopyrum tataricum (Tartarian buckwheat), this protein is Maturase K.